Reading from the N-terminus, the 276-residue chain is Shikimate dehydrogenase (NADP(+)) (276 aa).

Shikimate-binding positions include 18 to 20 (SKS) and T65. K69 (proton acceptor) is an active-site residue. E81 is an NADP(+) binding site. Shikimate is bound by residues N90 and D106. Residues 130-134 (GAGGA), 154-159 (NRTSSK), and M217 each bind NADP(+). Y219 lines the shikimate pocket. NADP(+) is bound at residue G241.

The protein belongs to the shikimate dehydrogenase family. In terms of assembly, homodimer.

It catalyses the reaction shikimate + NADP(+) = 3-dehydroshikimate + NADPH + H(+). Its pathway is metabolic intermediate biosynthesis; chorismate biosynthesis; chorismate from D-erythrose 4-phosphate and phosphoenolpyruvate: step 4/7. Involved in the biosynthesis of the chorismate, which leads to the biosynthesis of aromatic amino acids. Catalyzes the reversible NADPH linked reduction of 3-dehydroshikimate (DHSA) to yield shikimate (SA). The protein is Shikimate dehydrogenase (NADP(+)) of Vibrio atlanticus (strain LGP32) (Vibrio splendidus (strain Mel32)).